We begin with the raw amino-acid sequence, 437 residues long: Dolichyl-diphosphooligosaccharide--protein glycosyltransferase 48 kDa subunit (437 aa).

The signal sequence occupies residues 1-24 (MASLRVSVLLVAASCLLLGSGLRA). Topologically, residues 25 to 407 (GPRTLVLLEN…QYERFIPSAY (383 aa)) are lumenal. Residues 408–428 (PYYASAFSVMFGLFIFSIVFL) traverse the membrane as a helical segment. At 429-437 (HMKEKEKSD) the chain is on the cytoplasmic side.

It belongs to the DDOST 48 kDa subunit family. In terms of assembly, component of the oligosaccharyltransferase (OST) complex.

The protein localises to the endoplasmic reticulum membrane. The protein operates within protein modification; protein glycosylation. In terms of biological role, subunit of the oligosaccharyl transferase (OST) complex that catalyzes the initial transfer of a defined glycan (Glc(3)Man(9)GlcNAc(2) in eukaryotes) from the lipid carrier dolichol-pyrophosphate to an asparagine residue within an Asn-X-Ser/Thr consensus motif in nascent polypeptide chains, the first step in protein N-glycosylation. N-glycosylation occurs cotranslationally and the complex associates with the Sec61 complex at the channel-forming translocon complex that mediates protein translocation across the endoplasmic reticulum (ER). All subunits are required for a maximal enzyme activity. Required for the assembly of both SST3A- and SS3B-containing OST complexes. This is Dolichyl-diphosphooligosaccharide--protein glycosyltransferase 48 kDa subunit from Xenopus tropicalis (Western clawed frog).